A 313-amino-acid polypeptide reads, in one-letter code: uncharacterized protein (313 aa).

This is an uncharacterized protein from Treponema pallidum (strain Nichols).